The chain runs to 72 residues: Large ribosomal subunit protein bL31 (72 aa).

4 residues coordinate Zn(2+): Cys16, Cys18, Cys37, and Cys40.

It belongs to the bacterial ribosomal protein bL31 family. Type A subfamily. Part of the 50S ribosomal subunit. It depends on Zn(2+) as a cofactor.

Its function is as follows. Binds the 23S rRNA. In Buchnera aphidicola subsp. Acyrthosiphon pisum (strain Tuc7), this protein is Large ribosomal subunit protein bL31.